The sequence spans 272 residues: Indole-3-glycerol phosphate synthase (272 aa).

This sequence belongs to the TrpC family.

The enzyme catalyses 1-(2-carboxyphenylamino)-1-deoxy-D-ribulose 5-phosphate + H(+) = (1S,2R)-1-C-(indol-3-yl)glycerol 3-phosphate + CO2 + H2O. The protein operates within amino-acid biosynthesis; L-tryptophan biosynthesis; L-tryptophan from chorismate: step 4/5. This chain is Indole-3-glycerol phosphate synthase, found in Mycobacterium tuberculosis (strain ATCC 25177 / H37Ra).